A 68-amino-acid chain; its full sequence is DNA-directed RNA polymerase subunit omega (68 aa).

This sequence belongs to the RNA polymerase subunit omega family. In terms of assembly, the RNAP catalytic core consists of 2 alpha, 1 beta, 1 beta' and 1 omega subunit. When a sigma factor is associated with the core the holoenzyme is formed, which can initiate transcription.

It catalyses the reaction RNA(n) + a ribonucleoside 5'-triphosphate = RNA(n+1) + diphosphate. In terms of biological role, promotes RNA polymerase assembly. Latches the N- and C-terminal regions of the beta' subunit thereby facilitating its interaction with the beta and alpha subunits. In Dechloromonas aromatica (strain RCB), this protein is DNA-directed RNA polymerase subunit omega.